Reading from the N-terminus, the 358-residue chain is UDP-N-acetylglucosamine--N-acetylmuramyl-(pentapeptide) pyrophosphoryl-undecaprenol N-acetylglucosamine transferase (358 aa).

UDP-N-acetyl-alpha-D-glucosamine is bound by residues 11-13, Arg-163, Ser-191, Ile-245, and Gln-290; that span reads TGG.

Belongs to the glycosyltransferase 28 family. MurG subfamily.

Its subcellular location is the cell inner membrane. It carries out the reaction di-trans,octa-cis-undecaprenyl diphospho-N-acetyl-alpha-D-muramoyl-L-alanyl-D-glutamyl-meso-2,6-diaminopimeloyl-D-alanyl-D-alanine + UDP-N-acetyl-alpha-D-glucosamine = di-trans,octa-cis-undecaprenyl diphospho-[N-acetyl-alpha-D-glucosaminyl-(1-&gt;4)]-N-acetyl-alpha-D-muramoyl-L-alanyl-D-glutamyl-meso-2,6-diaminopimeloyl-D-alanyl-D-alanine + UDP + H(+). The protein operates within cell wall biogenesis; peptidoglycan biosynthesis. Cell wall formation. Catalyzes the transfer of a GlcNAc subunit on undecaprenyl-pyrophosphoryl-MurNAc-pentapeptide (lipid intermediate I) to form undecaprenyl-pyrophosphoryl-MurNAc-(pentapeptide)GlcNAc (lipid intermediate II). The protein is UDP-N-acetylglucosamine--N-acetylmuramyl-(pentapeptide) pyrophosphoryl-undecaprenol N-acetylglucosamine transferase of Janthinobacterium sp. (strain Marseille) (Minibacterium massiliensis).